Here is a 255-residue protein sequence, read N- to C-terminus: tRNA (guanine-N(7)-)-methyltransferase (255 aa).

The S-adenosyl-L-methionine site is built by Glu64, Glu89, Asp116, and Asp138. Asp138 is an active-site residue. Substrate is bound by residues Lys142, Asp174, and 212-215; that span reads TRYE.

Belongs to the class I-like SAM-binding methyltransferase superfamily. TrmB family.

It carries out the reaction guanosine(46) in tRNA + S-adenosyl-L-methionine = N(7)-methylguanosine(46) in tRNA + S-adenosyl-L-homocysteine. Its pathway is tRNA modification; N(7)-methylguanine-tRNA biosynthesis. Catalyzes the formation of N(7)-methylguanine at position 46 (m7G46) in tRNA. This chain is tRNA (guanine-N(7)-)-methyltransferase, found in Rhodospirillum rubrum (strain ATCC 11170 / ATH 1.1.1 / DSM 467 / LMG 4362 / NCIMB 8255 / S1).